Here is a 194-residue protein sequence, read N- to C-terminus: Orotate phosphoribosyltransferase (194 aa).

Residue 116-124 (EDIVTTGLS) coordinates 5-phospho-alpha-D-ribose 1-diphosphate. Residues threonine 120 and arginine 148 each coordinate orotate.

This sequence belongs to the purine/pyrimidine phosphoribosyltransferase family. PyrE subfamily. In terms of assembly, homodimer. Requires Mg(2+) as cofactor.

It carries out the reaction orotidine 5'-phosphate + diphosphate = orotate + 5-phospho-alpha-D-ribose 1-diphosphate. It functions in the pathway pyrimidine metabolism; UMP biosynthesis via de novo pathway; UMP from orotate: step 1/2. In terms of biological role, catalyzes the transfer of a ribosyl phosphate group from 5-phosphoribose 1-diphosphate to orotate, leading to the formation of orotidine monophosphate (OMP). This Phenylobacterium zucineum (strain HLK1) protein is Orotate phosphoribosyltransferase.